Here is a 363-residue protein sequence, read N- to C-terminus: Src kinase-associated phosphoprotein 1 (363 aa).

The disordered stretch occupies residues 62–94 (PFPSDYKEEDGSDDNRSSSLGRSAQSDDASLAS). Over residues 84 to 94 (SAQSDDASLAS) the composition is skewed to low complexity. The 104-residue stretch at 118-221 (NVLKQGYLEK…WVDQIKIVLR (104 aa)) folds into the PH domain. A disordered region spans residues 227-273 (VIPVDDEEEEEEEEETYDDIEGEGGPPLPQPLSGTWGRGGDTGAADE). Residues 230 to 248 (VDDEEEEEEEEETYDDIEG) are compositionally biased toward acidic residues. Positions 301–362 (EYANYYQGLW…PKDFLHPAYI (62 aa)) constitute an SH3 domain.

Belongs to the SKAP family. In terms of assembly, homodimer. Phosphorylated on tyrosines.

It is found in the cytoplasm. The protein localises to the nucleus. It localises to the cell membrane. Positively regulates T-cell receptor signaling. Required for optimal conjugation between T-cells and antigen-presenting cells. The polypeptide is Src kinase-associated phosphoprotein 1 (skap1) (Takifugu rubripes (Japanese pufferfish)).